The chain runs to 164 residues: Large ribosomal subunit protein uL11 (164 aa).

The protein belongs to the universal ribosomal protein uL11 family. Part of the ribosomal stalk of the 50S ribosomal subunit. Interacts with L10 and the large rRNA to form the base of the stalk. L10 forms an elongated spine to which L12 dimers bind in a sequential fashion forming a multimeric L10(L12)X complex.

Forms part of the ribosomal stalk which helps the ribosome interact with GTP-bound translation factors. The chain is Large ribosomal subunit protein uL11 from Pyrococcus abyssi (strain GE5 / Orsay).